A 278-amino-acid chain; its full sequence is Shikimate dehydrogenase (NADP(+)) (278 aa).

Shikimate contacts are provided by residues 19-21 (SRS) and threonine 66. Lysine 70 acts as the Proton acceptor in catalysis. Residues asparagine 91 and aspartate 106 each contribute to the shikimate site. NADP(+) is bound by residues 129 to 133 (GAGGA) and phenylalanine 221. Tyrosine 223 serves as a coordination point for shikimate. Glycine 242 is a binding site for NADP(+).

This sequence belongs to the shikimate dehydrogenase family. As to quaternary structure, homodimer.

It carries out the reaction shikimate + NADP(+) = 3-dehydroshikimate + NADPH + H(+). The protein operates within metabolic intermediate biosynthesis; chorismate biosynthesis; chorismate from D-erythrose 4-phosphate and phosphoenolpyruvate: step 4/7. In terms of biological role, involved in the biosynthesis of the chorismate, which leads to the biosynthesis of aromatic amino acids. Catalyzes the reversible NADPH linked reduction of 3-dehydroshikimate (DHSA) to yield shikimate (SA). In Anaeromyxobacter dehalogenans (strain 2CP-1 / ATCC BAA-258), this protein is Shikimate dehydrogenase (NADP(+)).